Reading from the N-terminus, the 1111-residue chain is Histone deacetylase 5 (1111 aa).

K35 is covalently cross-linked (Glycyl lysine isopeptide (Lys-Gly) (interchain with G-Cter in SUMO2)). 3 disordered regions span residues 40 to 63 (GAMP…RGAL), 107 to 136 (RQHE…EQQR), and 187 to 272 (KEPT…SSPL). Basic and acidic residues predominate over residues 238-249 (DSRDDFPLRKTA). Residue S250 is modified to Phosphoserine; by AMPK, CaMK1, SIK1 and PKD/PRKD1. Basic and acidic residues predominate over residues 263 to 272 (KVAERRSSPL). At T283 the chain carries Phosphothreonine; by PKC. The tract at residues 474 to 495 (TVGKLPRHRPLSRTQSSPLPQS) is disordered. Residues 485–495 (SRTQSSPLPQS) are compositionally biased toward low complexity. S489 bears the Phosphoserine; by AMPK, CaMK1, SIK1 and PKD/PRKD1 mark. Position 524 is an N6-acetyllysine (K524). 2 disordered regions span residues 527 to 611 (TKTG…LEES) and 645 to 666 (LGRT…DQPT). Residues 572–610 (STQEDLEEEEDEEEEDEDCIQVKDEEGESGPDEGPDLEE) are compositionally biased toward acidic residues. Phosphoserine is present on residues S600 and S650. The tract at residues 671–1017 (TTGVVYDTFM…VSALLSVELQ (347 aa)) is histone deacetylase. Positions 685, 687, 693, and 770 each coordinate Zn(2+). The active site involves H822. The Nuclear export signal motif lies at 1070 to 1109 (EEAETVSAMALLSVGAEQAQAVATQEHSPRPAEEPMEQEP). Residues 1086 to 1111 (EQAQAVATQEHSPRPAEEPMEQEPTL) form a disordered region. S1097 carries the phosphoserine modification.

It belongs to the histone deacetylase family. HD type 2 subfamily. As to quaternary structure, interacts with AHRR, BAHD1, BCOR, HDAC7, HDAC9, CTBP1, MEF2C, NCOR2, NRIP1, PHB2 and a 14-3-3 chaperone protein. Interacts with BCL6, DDIT3/CHOP, GRK5, KDM5B and MYOCD. Interacts with EP300 in the presence of TFAP2C. Interacts with ANKRA2. Interacts with CUL7 (as part of the 3M complex); negatively regulated by ANKRA2. Interacts with ZBTB7B; the interaction allows the recruitment of HDAC4 on CD8 loci for deacetylation and possible inhibition of CD8 genes expression. Interacts with RARA. Phosphorylated by AMPK, CaMK1, SIK1 and PRKD1 at Ser-250 and Ser-489. The phosphorylation is required for the export to the cytoplasm and inhibition. Phosphorylated by the PKC kinases PKN1 and PKN2, impairing nuclear import. Phosphorylated by GRK5, leading to nuclear export of HDAC5 and allowing MEF2-mediated transcription. Post-translationally, ubiquitinated. Polyubiquitination however does not lead to its degradation.

Its subcellular location is the nucleus. The protein localises to the cytoplasm. The enzyme catalyses N(6)-acetyl-L-lysyl-[histone] + H2O = L-lysyl-[histone] + acetate. Functionally, responsible for the deacetylation of lysine residues on the N-terminal part of the core histones (H2A, H2B, H3 and H4). Histone deacetylation gives a tag for epigenetic repression and plays an important role in transcriptional regulation, cell cycle progression and developmental events. Histone deacetylases act via the formation of large multiprotein complexes. Involved in muscle maturation by repressing transcription of myocyte enhancer MEF2C. During muscle differentiation, it shuttles into the cytoplasm, allowing the expression of myocyte enhancer factors. Serves as a corepressor of RARA and causes its deacetylation. In association with RARA, plays a role in the repression of microRNA-10a and thereby in the inflammatory response. This is Histone deacetylase 5 (HDAC5) from Cricetulus griseus (Chinese hamster).